A 182-amino-acid chain; its full sequence is MEEKKRCEESEKIKEQENETLPNEDSPSMGKKVAELENEISNLKDLYLRKQAEFENFRKRLEKDKENFIKFANENIMKDIINFLDNLERAIDSSKQSKDFDTLLSGISMIESEVLSSFDKKYNLKKFGKPGEDFDPSQHEAISIEEKEGVKTPEIVEVYQKGYCYNNRVLRTAKVKVAQSKN.

Residues Met-1 to Glu-17 show a composition bias toward basic and acidic residues. The tract at residues Met-1–Val-33 is disordered.

It belongs to the GrpE family. Homodimer.

Its subcellular location is the cytoplasm. Its function is as follows. Participates actively in the response to hyperosmotic and heat shock by preventing the aggregation of stress-denatured proteins, in association with DnaK and GrpE. It is the nucleotide exchange factor for DnaK and may function as a thermosensor. Unfolded proteins bind initially to DnaJ; upon interaction with the DnaJ-bound protein, DnaK hydrolyzes its bound ATP, resulting in the formation of a stable complex. GrpE releases ADP from DnaK; ATP binding to DnaK triggers the release of the substrate protein, thus completing the reaction cycle. Several rounds of ATP-dependent interactions between DnaJ, DnaK and GrpE are required for fully efficient folding. The chain is Protein GrpE from Borrelia hermsii (strain HS1 / DAH).